A 372-amino-acid polypeptide reads, in one-letter code: Ciliary neurotrophic factor receptor subunit alpha (372 aa).

The N-terminal stretch at 1–22 (MAASVPWACCAVLAAAAAAVYT) is a signal peptide. The region spanning 27–104 (PQEAPHVQYE…WHLRHQVLLH (78 aa)) is the Ig-like C2-type domain. Residues cysteine 46 and cysteine 89 are joined by a disulfide bond. Residues asparagine 60, asparagine 70, asparagine 142, asparagine 190, and asparagine 261 are each glycosylated (N-linked (GlcNAc...) asparagine). Fibronectin type-III domains follow at residues 108-205 (PPRE…VKPD) and 206-306 (PPEN…TEEP). The short motif at 290 to 294 (WSDWS) is the WSXWS motif element. The disordered stretch occupies residues 301–339 (PWTEEPRHLTTEAQAPETTTSTTSSLAPPPTTKICDPGE). Low complexity predominate over residues 311–326 (TEAQAPETTTSTTSSL). A lipid anchor (GPI-anchor amidated serine) is attached at serine 342. Positions 343 to 372 (GGGPSIPFLTSVPVTLVLAAAAATANNLLI) are cleaved as a propeptide — removed in mature form.

This sequence belongs to the type I cytokine receptor family. Type 3 subfamily. Forms a heterotrimer with LIFR and IL6ST. Interacts with heterodimeric neurotropic cytokine composed of CLCF1/CLC and CRLF1/CLF-1. Either alone or in complex with the heterodimer CLCF1-CRLF1 interacts with SORL1; this interaction may promote internalization and lysosomal degradation. Nervous system.

It is found in the cell membrane. Binds to CNTF. The alpha subunit provides the receptor specificity. This is Ciliary neurotrophic factor receptor subunit alpha (Cntfr) from Rattus norvegicus (Rat).